A 277-amino-acid chain; its full sequence is Release factor glutamine methyltransferase (277 aa).

Residues 117–121 (GTGCG), aspartate 140, tryptophan 168, and asparagine 182 contribute to the S-adenosyl-L-methionine site. 182 to 185 (NPPY) lines the substrate pocket.

The protein belongs to the protein N5-glutamine methyltransferase family. PrmC subfamily.

It catalyses the reaction L-glutaminyl-[peptide chain release factor] + S-adenosyl-L-methionine = N(5)-methyl-L-glutaminyl-[peptide chain release factor] + S-adenosyl-L-homocysteine + H(+). Functionally, methylates the class 1 translation termination release factors RF1/PrfA and RF2/PrfB on the glutamine residue of the universally conserved GGQ motif. This Buchnera aphidicola subsp. Acyrthosiphon pisum (strain APS) (Acyrthosiphon pisum symbiotic bacterium) protein is Release factor glutamine methyltransferase.